The primary structure comprises 452 residues: Bifunctional protein GlmU (452 aa).

Positions 1 to 232 (MTGRSCLTIV…EDEVRGINTK (232 aa)) are pyrophosphorylase. Residues 11 to 14 (LAAG), Lys25, Gln78, and 83 to 84 (GT) contribute to the UDP-N-acetyl-alpha-D-glucosamine site. Position 108 (Asp108) interacts with Mg(2+). UDP-N-acetyl-alpha-D-glucosamine is bound by residues Gly144, Glu158, Asn173, and Asn230. Residue Asn230 coordinates Mg(2+). Residues 233–253 (AQLAEAEQVMQARLRKEALDA) form a linker region. The N-acetyltransferase stretch occupies residues 254–452 (GVTMVAPDTV…KLLAKKPKTG (199 aa)). Positions 319 and 337 each coordinate UDP-N-acetyl-alpha-D-glucosamine. The Proton acceptor role is filled by His349. The UDP-N-acetyl-alpha-D-glucosamine site is built by Tyr352 and Asn363. Residues Ala366, 372–373 (NY), Ser391, Ser409, and Arg426 each bind acetyl-CoA.

The protein in the N-terminal section; belongs to the N-acetylglucosamine-1-phosphate uridyltransferase family. It in the C-terminal section; belongs to the transferase hexapeptide repeat family. As to quaternary structure, homotrimer. Mg(2+) is required as a cofactor.

It localises to the cytoplasm. It catalyses the reaction alpha-D-glucosamine 1-phosphate + acetyl-CoA = N-acetyl-alpha-D-glucosamine 1-phosphate + CoA + H(+). The enzyme catalyses N-acetyl-alpha-D-glucosamine 1-phosphate + UTP + H(+) = UDP-N-acetyl-alpha-D-glucosamine + diphosphate. The protein operates within nucleotide-sugar biosynthesis; UDP-N-acetyl-alpha-D-glucosamine biosynthesis; N-acetyl-alpha-D-glucosamine 1-phosphate from alpha-D-glucosamine 6-phosphate (route II): step 2/2. Its pathway is nucleotide-sugar biosynthesis; UDP-N-acetyl-alpha-D-glucosamine biosynthesis; UDP-N-acetyl-alpha-D-glucosamine from N-acetyl-alpha-D-glucosamine 1-phosphate: step 1/1. It participates in bacterial outer membrane biogenesis; LPS lipid A biosynthesis. In terms of biological role, catalyzes the last two sequential reactions in the de novo biosynthetic pathway for UDP-N-acetylglucosamine (UDP-GlcNAc). The C-terminal domain catalyzes the transfer of acetyl group from acetyl coenzyme A to glucosamine-1-phosphate (GlcN-1-P) to produce N-acetylglucosamine-1-phosphate (GlcNAc-1-P), which is converted into UDP-GlcNAc by the transfer of uridine 5-monophosphate (from uridine 5-triphosphate), a reaction catalyzed by the N-terminal domain. The polypeptide is Bifunctional protein GlmU (Nitrobacter hamburgensis (strain DSM 10229 / NCIMB 13809 / X14)).